A 504-amino-acid polypeptide reads, in one-letter code: Anaerobic nitric oxide reductase transcription regulator NorR (504 aa).

A 4-aspartylphosphate modification is found at Asp57. Positions 187–416 (MIGLSPGMTQ…LEHAIHRAVV (230 aa)) constitute a Sigma-54 factor interaction domain. Residues 215 to 222 (GETGTGKE) and 278 to 287 (ADNGTLFLDE) contribute to the ATP site. Residues 479 to 498 (WAACARMLETDVANLHRLAK) constitute a DNA-binding region (H-T-H motif).

It functions in the pathway nitrogen metabolism; nitric oxide reduction. In terms of biological role, required for the expression of anaerobic nitric oxide (NO) reductase, acts as a transcriptional activator for at least the norVW operon. Activation also requires sigma-54. The polypeptide is Anaerobic nitric oxide reductase transcription regulator NorR (Shigella dysenteriae serotype 1 (strain Sd197)).